A 388-amino-acid chain; its full sequence is Chorismate synthase (388 aa).

Arginine 39 and arginine 45 together coordinate NADP(+). FMN is bound by residues 132–134 (RSS), 251–252 (NA), glycine 296, 311–315 (KPIPT), and arginine 337.

The protein belongs to the chorismate synthase family. As to quaternary structure, homotetramer. FMNH2 serves as cofactor.

It carries out the reaction 5-O-(1-carboxyvinyl)-3-phosphoshikimate = chorismate + phosphate. Its pathway is metabolic intermediate biosynthesis; chorismate biosynthesis; chorismate from D-erythrose 4-phosphate and phosphoenolpyruvate: step 7/7. Functionally, catalyzes the anti-1,4-elimination of the C-3 phosphate and the C-6 proR hydrogen from 5-enolpyruvylshikimate-3-phosphate (EPSP) to yield chorismate, which is the branch point compound that serves as the starting substrate for the three terminal pathways of aromatic amino acid biosynthesis. This reaction introduces a second double bond into the aromatic ring system. This is Chorismate synthase from Staphylococcus aureus (strain MRSA252).